We begin with the raw amino-acid sequence, 93 residues long: MKSTPFFYPEAIVLAYLYDNEGIATYDLYKKVNAEFPMSTATFYDAKKFLIQEGFVKERQERGEKRLYLTEKGKLFAISLKTAIETYKQIKKR.

As to quaternary structure, homodimer.

Probable transcription factor that recognizes a (pseudo-)palindromic DNA target sequence. This Saccharolobus solfataricus (Sulfolobus solfataricus) protein is Protein F-93.